Here is a 196-residue protein sequence, read N- to C-terminus: Holliday junction branch migration complex subunit RuvA (196 aa).

A domain I region spans residues 1 to 63 (MYDYIKGILT…EDAHLLYGFA (63 aa)). The segment at 64 to 142 (TENEKSVFLS…MSEEAGPVQQ (79 aa)) is domain II. The flexible linker stretch occupies residues 142–146 (QVAPS). The interval 147–196 (SENIALEEAMEAMEALGYRPAELKKIKKFFEGTNDTAENYIKSALKMLMK) is domain III.

It belongs to the RuvA family. As to quaternary structure, homotetramer. Forms an RuvA(8)-RuvB(12)-Holliday junction (HJ) complex. HJ DNA is sandwiched between 2 RuvA tetramers; dsDNA enters through RuvA and exits via RuvB. An RuvB hexamer assembles on each DNA strand where it exits the tetramer. Each RuvB hexamer is contacted by two RuvA subunits (via domain III) on 2 adjacent RuvB subunits; this complex drives branch migration. In the full resolvosome a probable DNA-RuvA(4)-RuvB(12)-RuvC(2) complex forms which resolves the HJ.

It localises to the cytoplasm. In terms of biological role, the RuvA-RuvB-RuvC complex processes Holliday junction (HJ) DNA during genetic recombination and DNA repair, while the RuvA-RuvB complex plays an important role in the rescue of blocked DNA replication forks via replication fork reversal (RFR). RuvA specifically binds to HJ cruciform DNA, conferring on it an open structure. The RuvB hexamer acts as an ATP-dependent pump, pulling dsDNA into and through the RuvAB complex. HJ branch migration allows RuvC to scan DNA until it finds its consensus sequence, where it cleaves and resolves the cruciform DNA. The polypeptide is Holliday junction branch migration complex subunit RuvA (Streptococcus suis (strain 98HAH33)).